The following is a 201-amino-acid chain: Imidazoleglycerol-phosphate dehydratase (201 aa).

This sequence belongs to the imidazoleglycerol-phosphate dehydratase family.

It is found in the cytoplasm. It carries out the reaction D-erythro-1-(imidazol-4-yl)glycerol 3-phosphate = 3-(imidazol-4-yl)-2-oxopropyl phosphate + H2O. It functions in the pathway amino-acid biosynthesis; L-histidine biosynthesis; L-histidine from 5-phospho-alpha-D-ribose 1-diphosphate: step 6/9. This is Imidazoleglycerol-phosphate dehydratase from Prochlorococcus marinus subsp. pastoris (strain CCMP1986 / NIES-2087 / MED4).